The following is a 216-amino-acid chain: IQNDTGLPEESICSFRFLWRSTSVDDAVQIHWANGNIQVIRPVRGISINGEAQGGIRPPYWVILAFCRSADGRIICSEGYAHALYQLTCPVPVDSKLERNTLTALLNVASWLKRKPGTPELSLERPLFDTEVYVNGEKKYVLPDFIVTARAPDGKTARVVIETMGYEDSDYCARKSRQHTGMKQIGELHTDPPKWLDNDHPPFKKHMYGVFMHLRY.

It belongs to the channel forming colicin family.

This is an uncharacterized protein from Escherichia coli.